Here is a 448-residue protein sequence, read N- to C-terminus: N-succinylarginine dihydrolase (448 aa).

Substrate contacts are provided by residues 19–28 (GGLSYGNVAS), Asn-110, and 137–138 (HR). Residue Glu-174 is part of the active site. Arg-214 contributes to the substrate binding site. His-250 is an active-site residue. Substrate contacts are provided by Asp-252 and Asn-365. Cys-371 functions as the Nucleophile in the catalytic mechanism.

The protein belongs to the succinylarginine dihydrolase family. In terms of assembly, homodimer.

It catalyses the reaction N(2)-succinyl-L-arginine + 2 H2O + 2 H(+) = N(2)-succinyl-L-ornithine + 2 NH4(+) + CO2. Its pathway is amino-acid degradation; L-arginine degradation via AST pathway; L-glutamate and succinate from L-arginine: step 2/5. Functionally, catalyzes the hydrolysis of N(2)-succinylarginine into N(2)-succinylornithine, ammonia and CO(2). This Pseudomonas fluorescens (strain Pf0-1) protein is N-succinylarginine dihydrolase.